We begin with the raw amino-acid sequence, 189 residues long: Ribosome maturation factor RimM (189 aa).

The PRC barrel domain occupies 95 to 177 (EDDEFYYADL…AGLVDDPEEL (83 aa)).

Belongs to the RimM family. Binds ribosomal protein uS19.

The protein resides in the cytoplasm. Its function is as follows. An accessory protein needed during the final step in the assembly of 30S ribosomal subunit, possibly for assembly of the head region. Essential for efficient processing of 16S rRNA. May be needed both before and after RbfA during the maturation of 16S rRNA. It has affinity for free ribosomal 30S subunits but not for 70S ribosomes. The sequence is that of Ribosome maturation factor RimM from Rhizobium leguminosarum bv. trifolii (strain WSM2304).